The chain runs to 440 residues: 6-phospho-alpha-glucosidase (440 aa).

4–70 (FSVVIAGGGS…PEIEFSYTTD (67 aa)) is an NAD(+) binding site. Residues R93 and N147 each coordinate substrate. C169 contributes to the Mn(2+) binding site. Catalysis depends on D170, which acts as the Proton donor. H200 contacts Mn(2+). Y263 functions as the Proton acceptor in the catalytic mechanism. A substrate-binding site is contributed by R283.

Homodimer. The cofactor is NAD(+). Mn(2+) is required as a cofactor. Requires Co(2+) as cofactor. It depends on Ni(2+) as a cofactor.

It catalyses the reaction alpha-maltose 6'-phosphate + H2O = D-glucose 6-phosphate + D-glucose. Its pathway is glycan biosynthesis; sucrose metabolism. Is involved in the catabolism of alpha-glycosides accumulated via a phosphoenolpyruvate-dependent phosphotransferase system (PEP-PTS). Hydrolyzes a wide variety of 6-phospho-alpha-D-glucosides including maltose-6'-phosphate, isomaltose-6'-phosphate, maltitol-6-phosphate, trehalose-6-phosphate and the 6'-phosphorylated derivatives of the five linkage-isomeric alpha-D-glucosyl-D-fructoses: trehalulose-6'-phosphate, turanose-6'-phosphate, maltulose-6'-phosphate, leucrose-6'-phosphate, and palatinose-6'-phosphate. However, sucrose-6-phosphate is not a substrate for this enzyme. The sequence is that of 6-phospho-alpha-glucosidase from Klebsiella pneumoniae.